Here is a 239-residue protein sequence, read N- to C-terminus: MRPSGRKIDQMRKVSFERNFSKHAEGSCLVKFGDTHVLCTASLEEKTPPWLRNSGKGWVTAEYGMLPRATGERMKREAAAGKQGGRTQEIQRLIGRSLRAVVDLQALGERQITLDCDVIQADGGTRTASITGGWIALYDCLKWMESRNMIKVDRVLKDHVAAISCGVFASQPVIDLDYLEDSSAETDANFVMTGAGGIVEIQGTAEGTPFSEEEFTSLMGLAKNGIGELVALQKQAIAG.

Residues Arg86 and 124–126 each bind phosphate; that span reads GTR.

It belongs to the RNase PH family. In terms of assembly, homohexameric ring arranged as a trimer of dimers.

It carries out the reaction tRNA(n+1) + phosphate = tRNA(n) + a ribonucleoside 5'-diphosphate. Phosphorolytic 3'-5' exoribonuclease that plays an important role in tRNA 3'-end maturation. Removes nucleotide residues following the 3'-CCA terminus of tRNAs; can also add nucleotides to the ends of RNA molecules by using nucleoside diphosphates as substrates, but this may not be physiologically important. Probably plays a role in initiation of 16S rRNA degradation (leading to ribosome degradation) during starvation. In Rhizobium leguminosarum bv. trifolii (strain WSM2304), this protein is Ribonuclease PH.